A 411-amino-acid polypeptide reads, in one-letter code: Serpin A3-1 (411 aa).

The first 24 residues, 1–24 (MRAERTSFLLALGLLVAGIRSVHC), serve as a signal peptide directing secretion. Residues N100, N180, N230, and N264 are each glycosylated (N-linked (GlcNAc...) asparagine).

Belongs to the serpin family. Homodimer. N-glycosylated. Detected in all tissues examined (at protein level). Abundantly expressed in liver, kidney and spleen. Lowest levels were observed in diaphragm muscle.

The protein resides in the cytoplasmic vesicle. It localises to the secretory vesicle. It is found in the chromaffin granule. Its subcellular location is the secreted. In terms of biological role, potent inhibitor of the serine proteases elastase and trypsin. Moderately inhibits the serine proteases plasmin and chymotrypsin, and the thiol protease proenkephalin-processing enzyme. Does not inhibit the serine proteases cathepsin G, furin, kallikrein, thrombin, tissue plasminogen activator and urokinase, or the cysteine proteases cathepsin B, cathepsin L and papain. This is Serpin A3-1 from Bos taurus (Bovine).